Reading from the N-terminus, the 360-residue chain is Peptide chain release factor 1 (360 aa).

N5-methylglutamine is present on Gln235. Residues 285 to 311 are disordered; it reads KRQQAQASERRNLLGSGDRSDRHRTYN. Basic and acidic residues predominate over residues 292–308; the sequence is SERRNLLGSGDRSDRHR.

Belongs to the prokaryotic/mitochondrial release factor family. Post-translationally, methylated by PrmC. Methylation increases the termination efficiency of RF1.

It is found in the cytoplasm. Functionally, peptide chain release factor 1 directs the termination of translation in response to the peptide chain termination codons UAG and UAA. In Hamiltonella defensa subsp. Acyrthosiphon pisum (strain 5AT), this protein is Peptide chain release factor 1.